A 262-amino-acid chain; its full sequence is Acyl-[acyl-carrier-protein]--UDP-N-acetylglucosamine O-acyltransferase (262 aa).

The protein belongs to the transferase hexapeptide repeat family. LpxA subfamily. Homotrimer.

Its subcellular location is the cytoplasm. It catalyses the reaction a (3R)-hydroxyacyl-[ACP] + UDP-N-acetyl-alpha-D-glucosamine = a UDP-3-O-[(3R)-3-hydroxyacyl]-N-acetyl-alpha-D-glucosamine + holo-[ACP]. Its pathway is glycolipid biosynthesis; lipid IV(A) biosynthesis; lipid IV(A) from (3R)-3-hydroxytetradecanoyl-[acyl-carrier-protein] and UDP-N-acetyl-alpha-D-glucosamine: step 1/6. In terms of biological role, involved in the biosynthesis of lipid A, a phosphorylated glycolipid that anchors the lipopolysaccharide to the outer membrane of the cell. In Burkholderia mallei (strain NCTC 10247), this protein is Acyl-[acyl-carrier-protein]--UDP-N-acetylglucosamine O-acyltransferase.